The primary structure comprises 87 residues: Small ribosomal subunit protein bS20 (87 aa).

Positions 1–22 are disordered; the sequence is MANTSQARKRARQAGVRRVRNA. Residues 7-20 show a composition bias toward basic residues; it reads ARKRARQAGVRRVR.

It belongs to the bacterial ribosomal protein bS20 family.

Its function is as follows. Binds directly to 16S ribosomal RNA. The chain is Small ribosomal subunit protein bS20 from Nitrosococcus oceani (strain ATCC 19707 / BCRC 17464 / JCM 30415 / NCIMB 11848 / C-107).